The chain runs to 267 residues: Protein HesA, heterocyst (267 aa).

It belongs to the HesA/MoeB/ThiF family.

This chain is Protein HesA, heterocyst (hesA1), found in Trichormus variabilis (strain ATCC 29413 / PCC 7937) (Anabaena variabilis).